Here is a 303-residue protein sequence, read N- to C-terminus: Mitochondrial carrier homolog 2 (303 aa).

Position 2 is an N-acetylalanine (Ala2). Topologically, residues 2–15 (ADAASQVLLGSGLT) are mitochondrial intermembrane. Solcar repeat units follow at residues 2–98 (ADAA…YQEC) and 118–206 (DRVI…VNTY). A helical transmembrane segment spans residues 16–36 (ILSQPLMYVKVLIQVGYEPLA). Residues 37–77 (PTVGRNIFGRQVCQLPGLFCYAQHIASIDGKRGLFTGLTPR) lie on the Cytoplasmic side of the membrane. Residues 78–92 (LCSGVLGTVVHGKVL) form a helical membrane-spanning segment. The Mitochondrial intermembrane portion of the chain corresponds to 93-135 (QHYQECDKAEESGSGNVQKEVSSSFDRVIKETTREMMARSAAT). A helical membrane pass occupies residues 136-156 (LITHPFHVITLRSMVQFIGRE). Residues 157–180 (SKYCGLCDSIATIYREEGILGFFA) lie on the Cytoplasmic side of the membrane. Residues 181–199 (GLIPRLLGDIISLWLCNSL) traverse the membrane as a helical segment. At 200–231 (AYLVNTYALDSGVSTMNEMKSYSQAVTGFFAS) the chain is on the mitochondrial intermembrane side. Residues 232-252 (MLTYPFVLVSNLMAVNNCGLA) form a helical membrane-spanning segment. Over 253-280 (GGCPPYAPIYSSWIDCWCMLQKEGNMSR) the chain is Cytoplasmic. Residues 281-303 (GNSLFFRKVPFGKTYCCDLRMLI) form a helical membrane-spanning segment.

Belongs to the mitochondrial carrier (TC 2.A.29) family. As to quaternary structure, interacts with p15BID.

The protein resides in the mitochondrion outer membrane. In terms of biological role, protein insertase that mediates insertion of transmembrane proteins into the mitochondrial outer membrane. Catalyzes insertion of proteins with alpha-helical transmembrane regions, such as signal-anchored, tail-anchored and multi-pass membrane proteins. Does not mediate insertion of beta-barrel transmembrane proteins. Also acts as a receptor for the truncated form of pro-apoptotic BH3-interacting domain death agonist (p15 BID) and has therefore a critical function in apoptosis. Regulates the quiescence/cycling of hematopoietic stem cells (HSCs). Acts as a regulator of mitochondrial fusion, essential for the naive-to-primed interconversion of embryonic stem cells (ESCs). Acts as a regulator of lipid homeostasis and has a regulatory role in adipocyte differentiation and biology. The protein is Mitochondrial carrier homolog 2 (MTCH2) of Bos taurus (Bovine).